A 389-amino-acid chain; its full sequence is MSLPTNQLRLAMVAGEPSGDLLAASLLGGLQERLPASTRYYGIGGQRMLAHGFDSHWQMDKLTVRGYVEALGQIPEILRIRGELKRQLLAERPDAFIGVDAPDFNFSVEQAARDAGIPSIHFVCPSIWAWRGGRIKKIAKSVDHMLCLFPFEPAILDKAGVASTYVGHPLADEIPLEPDTHGARIALGLPADGPVIAVLPGSRRSEIGLIGPTFFAAMALMQQREPGVRFVMPAATPALRELLQPLVDAHPQLALTITDGRSQVAMTAADAILVKSGTVTLEAALLKKPMVISYKVPWLTGQIMRRQGYLPYVGLPNILAGRFVVPELLQHFATPEALADATLTQLRDDANRRTLTEVFTEMHLSLRQNTAAKAAEAVVRVLDQRRGRA.

It belongs to the LpxB family.

It catalyses the reaction a lipid X + a UDP-2-N,3-O-bis[(3R)-3-hydroxyacyl]-alpha-D-glucosamine = a lipid A disaccharide + UDP + H(+). Its pathway is bacterial outer membrane biogenesis; LPS lipid A biosynthesis. Its function is as follows. Condensation of UDP-2,3-diacylglucosamine and 2,3-diacylglucosamine-1-phosphate to form lipid A disaccharide, a precursor of lipid A, a phosphorylated glycolipid that anchors the lipopolysaccharide to the outer membrane of the cell. This chain is Lipid-A-disaccharide synthase, found in Burkholderia ambifaria (strain MC40-6).